An 87-amino-acid chain; its full sequence is MRLQKGLYYISLQVCVDITMDVVAMLVKDIGLNVEDDYTNIKKLLKHDVITKDEATLLKQYNRLRNAIVHKYDKIKLRSCKRRFKKN.

Active-site residues include Arg65 and His70. The RX(4)HXY motif signature appears at 65–72 (RNAIVHKY). Residue Tyr72 is modified to O-di-AMP-tyrosine.

The protein belongs to the HepT RNase toxin family. As to quaternary structure, homodimer, probably forms a complex with cognate antitoxin MJ1547. Modified by cognate antitoxin MJ1547; probably at least 2 successive AMPylation events occur on Tyr-72.

In terms of biological role, probable toxic component of a putative type VII toxin-antitoxin (TA) system, probably an RNase. Probably neutralized by cognate antitoxin MJ1547. Neutralization may be due to AMPylation by antitoxin MJ1547. The sequence is that of Putative RNase MJ1548 from Methanocaldococcus jannaschii (strain ATCC 43067 / DSM 2661 / JAL-1 / JCM 10045 / NBRC 100440) (Methanococcus jannaschii).